Here is a 314-residue protein sequence, read N- to C-terminus: HTH-type transcriptional regulator LeuO (314 aa).

The HTH lysR-type domain maps to 22-79; sequence VDLNLLTVFDAVMQEQNITRAAHVLGMSQPAVSNAVARLKVMFNDELFVRYGRGIQPT. A DNA-binding region (H-T-H motif) is located at residues 39–58; that stretch reads ITRAAHVLGMSQPAVSNAVA.

It belongs to the LysR transcriptional regulatory family.

In terms of biological role, a global transcription factor. Activates transcription of the 9 following operons; yjjQ-bglJ, yjjP, acrEF, ybdO, yjcRQP, casABCDE12, rhsD-ybbC, fepE and gltF, in most cases it probably interferes with silencing by H-NS and activates transcription. Represses transcription of the 3 following operons; uxaCA, sdaCB and btsT. H-NS repression of the bgl operon, leading to the ability to metabolize some beta-glucosides. It also directly activates the bgl operon. Activation is H-NS and BglJ-RcsB independent. This chain is HTH-type transcriptional regulator LeuO (leuO), found in Escherichia coli (strain K12).